The chain runs to 201 residues: UPF0301 protein MSMEG_6921/MSMEI_6732 (201 aa).

The protein belongs to the UPF0301 (AlgH) family.

The chain is UPF0301 protein MSMEG_6921/MSMEI_6732 from Mycolicibacterium smegmatis (strain ATCC 700084 / mc(2)155) (Mycobacterium smegmatis).